A 307-amino-acid polypeptide reads, in one-letter code: MTDSTYDVARVRTYLQGLQTRIADALGALDGTPLATDIWQRGPAERLRGGGCTRILEGGRVFERAGIGFSDVAGDALPPSASAARPQLAGRGFEALGVSLVLHPRNPYCPTVHMNVRMLIATKPGEAPIFWFGGGMDLTPVYGFEDDARHFHRTCKDALDPFGAELYPRFKKWCDEYFFLKHRNEMRGVGGIFFDDFSEPGFERSFEMMQSVGDAFLPAYLPIVERRAALPYGERERDFQAYRRGRYVEFNLVFDRGTLFGLQSGGRTESILMSMPPVANWRYNWQPEPGSPEARLYSDFIVPRDWV.

Serine 99 provides a ligand contact to substrate. Residues histidine 103 and histidine 113 each contribute to the a divalent metal cation site. Catalysis depends on histidine 113, which acts as the Proton donor. 115-117 lines the substrate pocket; that stretch reads NVR. Positions 152 and 182 each coordinate a divalent metal cation. The important for dimerization stretch occupies residues 247–282; the sequence is YVEFNLVFDRGTLFGLQSGGRTESILMSMPPVANWR. 265 to 267 provides a ligand contact to substrate; sequence GGR.

It belongs to the aerobic coproporphyrinogen-III oxidase family. In terms of assembly, homodimer. It depends on a divalent metal cation as a cofactor.

It localises to the cytoplasm. It catalyses the reaction coproporphyrinogen III + O2 + 2 H(+) = protoporphyrinogen IX + 2 CO2 + 2 H2O. The protein operates within porphyrin-containing compound metabolism; protoporphyrin-IX biosynthesis; protoporphyrinogen-IX from coproporphyrinogen-III (O2 route): step 1/1. Functionally, involved in the heme biosynthesis. Catalyzes the aerobic oxidative decarboxylation of propionate groups of rings A and B of coproporphyrinogen-III to yield the vinyl groups in protoporphyrinogen-IX. The sequence is that of Oxygen-dependent coproporphyrinogen-III oxidase from Burkholderia multivorans (strain ATCC 17616 / 249).